The sequence spans 317 residues: Probable deoxyhypusine synthase (317 aa).

Lysine 285 (nucleophile) is an active-site residue.

Belongs to the deoxyhypusine synthase family. Requires NAD(+) as cofactor.

It catalyses the reaction [eIF5A protein]-L-lysine + spermidine = [eIF5A protein]-deoxyhypusine + propane-1,3-diamine. It participates in protein modification; eIF5A hypusination. In terms of biological role, catalyzes the NAD-dependent oxidative cleavage of spermidine and the subsequent transfer of the butylamine moiety of spermidine to the epsilon-amino group of a specific lysine residue of the eIF-5A precursor protein to form the intermediate deoxyhypusine residue. The sequence is that of Probable deoxyhypusine synthase (dys) from Methanosarcina thermophila.